A 99-amino-acid polypeptide reads, in one-letter code: Sec-independent protein translocase protein TatA (99 aa).

Residues 1–21 (MIGNLKPLEIVLIIAVILLLF) form a helical membrane-spanning segment. Residues 46 to 99 (AMKKDDAATAAPTTETVADDTVPPQSTTARTIQAAPGDVTSSRPVSEAKPTTQS) are disordered. The span at 53 to 69 (ATAAPTTETVADDTVPP) shows a compositional bias: low complexity. Over residues 84–99 (VTSSRPVSEAKPTTQS) the composition is skewed to polar residues.

The protein belongs to the TatA/E family. In terms of assembly, the Tat system comprises two distinct complexes: a TatABC complex, containing multiple copies of TatA, TatB and TatC subunits, and a separate TatA complex, containing only TatA subunits. Substrates initially bind to the TatABC complex, which probably triggers association of the separate TatA complex to form the active translocon.

Its subcellular location is the cell membrane. In terms of biological role, part of the twin-arginine translocation (Tat) system that transports large folded proteins containing a characteristic twin-arginine motif in their signal peptide across membranes. TatA could form the protein-conducting channel of the Tat system. The chain is Sec-independent protein translocase protein TatA from Streptomyces griseus subsp. griseus (strain JCM 4626 / CBS 651.72 / NBRC 13350 / KCC S-0626 / ISP 5235).